The primary structure comprises 550 residues: Alkaline phosphatase PhoV (550 aa).

Residues 1 to 20 (MKIKLLCISLAVLFCSSANA) form the signal peptide. The Zn(2+) site is built by D48 and T89. Catalysis depends on T89, which acts as the Phosphothreonine intermediate. Substrate contacts are provided by residues N110 and 171–173 (KDR). The Zn(2+) site is built by D313, H317, D360, H361, and H491.

It depends on Zn(2+) as a cofactor.

Its subcellular location is the cell inner membrane. The catalysed reaction is a phosphate monoester + H2O = an alcohol + phosphate. Subject to competitive inhibition by phosphate. Inhibited by manganese. Magnesium mildly increases enzyme activity when the zinc concentration is suboptimal. Optimal activity is dependent on the presence of 0.01-2% Triton X-100. Triton X-100 at a concentration of 0.05% increases the activity about fivefold relative to that in its absence. The enzyme is even active in Triton X-100 concentrations up to 80%. 50% inhibition by 4 mM EDTA and 50% inhibition by 48 mM sodium citrate. Functionally, alkaline phosphatase with broad substrate specificity. This is Alkaline phosphatase PhoV from Synechococcus elongatus (strain ATCC 33912 / PCC 7942 / FACHB-805) (Anacystis nidulans R2).